The primary structure comprises 584 residues: uncharacterized protein (584 aa).

A helical transmembrane segment spans residues Phe15–Leu35. Composition is skewed to polar residues over residues Asp184–Asn194 and Gly204–Ile225. The segment at Asp184–Ser226 is disordered. Coiled coils occupy residues Asp267–Pro319 and Arg436–Arg477.

The protein localises to the membrane. This is an uncharacterized protein from Plasmodium falciparum (isolate 3D7).